The primary structure comprises 218 residues: Protein-L-isoaspartate O-methyltransferase (218 aa).

S69 is a catalytic residue.

Belongs to the methyltransferase superfamily. L-isoaspartyl/D-aspartyl protein methyltransferase family.

The protein localises to the cytoplasm. It catalyses the reaction [protein]-L-isoaspartate + S-adenosyl-L-methionine = [protein]-L-isoaspartate alpha-methyl ester + S-adenosyl-L-homocysteine. Catalyzes the methyl esterification of L-isoaspartyl residues in peptides and proteins that result from spontaneous decomposition of normal L-aspartyl and L-asparaginyl residues. It plays a role in the repair and/or degradation of damaged proteins. This Aromatoleum aromaticum (strain DSM 19018 / LMG 30748 / EbN1) (Azoarcus sp. (strain EbN1)) protein is Protein-L-isoaspartate O-methyltransferase.